A 175-amino-acid chain; its full sequence is Large ribosomal subunit protein uL10 (175 aa).

Belongs to the universal ribosomal protein uL10 family. In terms of assembly, part of the ribosomal stalk of the 50S ribosomal subunit. The N-terminus interacts with L11 and the large rRNA to form the base of the stalk. The C-terminus forms an elongated spine to which L12 dimers bind in a sequential fashion forming a multimeric L10(L12)X complex.

In terms of biological role, forms part of the ribosomal stalk, playing a central role in the interaction of the ribosome with GTP-bound translation factors. This is Large ribosomal subunit protein uL10 from Synechococcus sp. (strain CC9902).